Consider the following 67-residue polypeptide: Small ribosomal subunit protein eS17 (67 aa).

Belongs to the eukaryotic ribosomal protein eS17 family.

This Pyrococcus abyssi (strain GE5 / Orsay) protein is Small ribosomal subunit protein eS17.